Reading from the N-terminus, the 258-residue chain is Phosphoadenosine 5'-phosphosulfate reductase (258 aa).

Residue Cys-244 is the Nucleophile; cysteine thiosulfonate intermediate of the active site.

The protein belongs to the PAPS reductase family. CysH subfamily.

It is found in the cytoplasm. It catalyses the reaction [thioredoxin]-disulfide + sulfite + adenosine 3',5'-bisphosphate + 2 H(+) = [thioredoxin]-dithiol + 3'-phosphoadenylyl sulfate. Its pathway is sulfur metabolism; hydrogen sulfide biosynthesis; sulfite from sulfate: step 3/3. Catalyzes the formation of sulfite from phosphoadenosine 5'-phosphosulfate (PAPS) using thioredoxin as an electron donor. In Vibrio vulnificus (strain YJ016), this protein is Phosphoadenosine 5'-phosphosulfate reductase.